The primary structure comprises 326 residues: DNA-directed RNA polymerase subunit alpha (326 aa).

Residues 1–231 (MQTALLKPKI…DQLSVFAALE (231 aa)) form an alpha N-terminal domain (alpha-NTD) region. Residues 247 to 326 (IDPILLRPVD…ENWPPAGLDK (80 aa)) are alpha C-terminal domain (alpha-CTD).

Belongs to the RNA polymerase alpha chain family. In terms of assembly, homodimer. The RNAP catalytic core consists of 2 alpha, 1 beta, 1 beta' and 1 omega subunit. When a sigma factor is associated with the core the holoenzyme is formed, which can initiate transcription.

It carries out the reaction RNA(n) + a ribonucleoside 5'-triphosphate = RNA(n+1) + diphosphate. DNA-dependent RNA polymerase catalyzes the transcription of DNA into RNA using the four ribonucleoside triphosphates as substrates. The sequence is that of DNA-directed RNA polymerase subunit alpha from Cupriavidus pinatubonensis (strain JMP 134 / LMG 1197) (Cupriavidus necator (strain JMP 134)).